We begin with the raw amino-acid sequence, 204 residues long: Large ribosomal subunit protein bL9 (204 aa).

The segment at 180–204 (DDIGGAASDDEGDAPAAAADEEESK) is disordered. The span at 187–204 (SDDEGDAPAAAADEEESK) shows a compositional bias: acidic residues.

Belongs to the bacterial ribosomal protein bL9 family.

Binds to the 23S rRNA. The polypeptide is Large ribosomal subunit protein bL9 (Ruegeria sp. (strain TM1040) (Silicibacter sp.)).